The sequence spans 388 residues: Arginine biosynthesis bifunctional protein ArgJ 2 (388 aa).

Substrate-binding residues include Thr-145, Lys-167, Thr-178, Glu-257, and Asn-381. Catalysis depends on Thr-178, which acts as the Nucleophile.

It belongs to the ArgJ family. As to quaternary structure, heterotetramer of two alpha and two beta chains.

Its subcellular location is the cytoplasm. It carries out the reaction N(2)-acetyl-L-ornithine + L-glutamate = N-acetyl-L-glutamate + L-ornithine. The catalysed reaction is L-glutamate + acetyl-CoA = N-acetyl-L-glutamate + CoA + H(+). It participates in amino-acid biosynthesis; L-arginine biosynthesis; L-ornithine and N-acetyl-L-glutamate from L-glutamate and N(2)-acetyl-L-ornithine (cyclic): step 1/1. It functions in the pathway amino-acid biosynthesis; L-arginine biosynthesis; N(2)-acetyl-L-ornithine from L-glutamate: step 1/4. Catalyzes two activities which are involved in the cyclic version of arginine biosynthesis: the synthesis of N-acetylglutamate from glutamate and acetyl-CoA as the acetyl donor, and of ornithine by transacetylation between N(2)-acetylornithine and glutamate. The sequence is that of Arginine biosynthesis bifunctional protein ArgJ 2 from Clostridium acetobutylicum (strain ATCC 824 / DSM 792 / JCM 1419 / IAM 19013 / LMG 5710 / NBRC 13948 / NRRL B-527 / VKM B-1787 / 2291 / W).